The primary structure comprises 83 residues: Short neurotoxin C (83 aa).

The N-terminal stretch at 1-21 (MKTLLLTLVVVTMVCLDLAYT) is a signal peptide. 4 disulfide bridges follow: cysteine 24/cysteine 45, cysteine 38/cysteine 62, cysteine 64/cysteine 75, and cysteine 76/cysteine 81.

It belongs to the three-finger toxin family. Short-chain subfamily. Type I alpha-neurotoxin sub-subfamily. As to expression, expressed by the venom gland.

It localises to the secreted. Functionally, binds to muscle nicotinic acetylcholine receptor (nAChR) and inhibit acetylcholine from binding to the receptor, thereby impairing neuromuscular transmission. The chain is Short neurotoxin C from Laticauda colubrina (Yellow-lipped sea krait).